Consider the following 249-residue polypeptide: MTAKLILLRHGESEWNSKNLFTGWVDVDLNEKGEGEARHAADLLKQENLLPDIVHTSLLRRAIHTAYLALDGCDRHWIPVHRSWRLNERHYGALQGLNKAETKEKYGNDQFMAWRRSYDVRPPDLDRDSEFSQFHDPRYADIPASERPVAECLKDVVARMVPYFTSDIAADLKDGKTVLVAAHGNSLRALVKHLDEISDEDIAGLNIPTGIPLFYELDDNLKPVTRGGRYLDPEAAAAGAKAVANQGNK.

Substrate-binding positions include 9–16 (RHGESEWN), 22–23 (TG), Arg61, 88–91 (ERHY), Lys99, 115–116 (RR), and 184–185 (GN). His10 functions as the Tele-phosphohistidine intermediate in the catalytic mechanism. Glu88 (proton donor/acceptor) is an active-site residue.

It belongs to the phosphoglycerate mutase family. BPG-dependent PGAM subfamily.

The enzyme catalyses (2R)-2-phosphoglycerate = (2R)-3-phosphoglycerate. The protein operates within carbohydrate degradation; glycolysis; pyruvate from D-glyceraldehyde 3-phosphate: step 3/5. In terms of biological role, catalyzes the interconversion of 2-phosphoglycerate and 3-phosphoglycerate. In Cutibacterium acnes (strain DSM 16379 / KPA171202) (Propionibacterium acnes), this protein is 2,3-bisphosphoglycerate-dependent phosphoglycerate mutase.